Here is a 115-residue protein sequence, read N- to C-terminus: Large ribosomal subunit protein bL20c (115 aa).

It belongs to the bacterial ribosomal protein bL20 family.

The protein resides in the plastid. Its subcellular location is the chloroplast. In terms of biological role, binds directly to 23S ribosomal RNA and is necessary for the in vitro assembly process of the 50S ribosomal subunit. It is not involved in the protein synthesizing functions of that subunit. The polypeptide is Large ribosomal subunit protein bL20c (rpl20) (Chlorella vulgaris (Green alga)).